Consider the following 381-residue polypeptide: 4-hydroxy-3-methylbut-2-en-1-yl diphosphate synthase (flavodoxin) (381 aa).

[4Fe-4S] cluster contacts are provided by Cys-273, Cys-276, Cys-308, and Glu-315.

It belongs to the IspG family. [4Fe-4S] cluster is required as a cofactor.

It carries out the reaction (2E)-4-hydroxy-3-methylbut-2-enyl diphosphate + oxidized [flavodoxin] + H2O + 2 H(+) = 2-C-methyl-D-erythritol 2,4-cyclic diphosphate + reduced [flavodoxin]. It participates in isoprenoid biosynthesis; isopentenyl diphosphate biosynthesis via DXP pathway; isopentenyl diphosphate from 1-deoxy-D-xylulose 5-phosphate: step 5/6. In terms of biological role, converts 2C-methyl-D-erythritol 2,4-cyclodiphosphate (ME-2,4cPP) into 1-hydroxy-2-methyl-2-(E)-butenyl 4-diphosphate. In Gluconobacter oxydans (strain 621H) (Gluconobacter suboxydans), this protein is 4-hydroxy-3-methylbut-2-en-1-yl diphosphate synthase (flavodoxin).